A 62-amino-acid polypeptide reads, in one-letter code: Large ribosomal subunit protein bL28 (62 aa).

The interval 1–23 is disordered; the sequence is MARRCFVTGKSAKAGNARSHSMR.

The protein belongs to the bacterial ribosomal protein bL28 family.

This Brevibacillus brevis (strain 47 / JCM 6285 / NBRC 100599) protein is Large ribosomal subunit protein bL28.